A 227-amino-acid polypeptide reads, in one-letter code: PKHD-type hydroxylase Caul_0045 (227 aa).

The Fe2OG dioxygenase domain maps to 78–178 (TILSPLFNRY…RTASFFWIQS (101 aa)). 3 residues coordinate Fe cation: H96, D98, and H159. R169 contacts 2-oxoglutarate.

Fe(2+) serves as cofactor. The cofactor is L-ascorbate.

The protein is PKHD-type hydroxylase Caul_0045 of Caulobacter sp. (strain K31).